The following is a 250-amino-acid chain: Coproheme decarboxylase (250 aa).

Fe-coproporphyrin III is bound by residues Arg-131, Tyr-145 to Lys-149, His-172, and Gln-185. Residue Tyr-145 is part of the active site.

The protein belongs to the ChdC family. Type 1 subfamily. It depends on Fe-coproporphyrin III as a cofactor.

The catalysed reaction is Fe-coproporphyrin III + 2 H2O2 + 2 H(+) = heme b + 2 CO2 + 4 H2O. It carries out the reaction Fe-coproporphyrin III + H2O2 + H(+) = harderoheme III + CO2 + 2 H2O. The enzyme catalyses harderoheme III + H2O2 + H(+) = heme b + CO2 + 2 H2O. The protein operates within porphyrin-containing compound metabolism; protoheme biosynthesis. Its function is as follows. Involved in coproporphyrin-dependent heme b biosynthesis. Catalyzes the decarboxylation of Fe-coproporphyrin III (coproheme) to heme b (protoheme IX), the last step of the pathway. The reaction occurs in a stepwise manner with a three-propionate intermediate. The chain is Coproheme decarboxylase from Staphylococcus aureus (strain USA300 / TCH1516).